Here is a 1091-residue protein sequence, read N- to C-terminus: ATP-citrate synthase (1091 aa).

The ATP-grasp domain occupies 4–265 (KAISEQTGKE…LDAKSGASLK (262 aa)). The ATP site is built by Lys58, Arg66, Gly67, Pro109, Val111, and Glu118. Tyr131 carries the post-translational modification Phosphotyrosine. Asp216 lines the ATP pocket. The Mg(2+) site is built by Asp257, Ser260, and Ala262. Ser263 carries the phosphoserine modification. The citrate site is built by Gly309, Asn346, Thr348, Tyr364, and Arg379. A compositionally biased stretch (low complexity) spans 442-457 (SGSTSTPAPSRTASFS). The segment at 442–471 (SGSTSTPAPSRTASFSESRTDEVAPAKKAK) is disordered. Thr447 bears the Phosphothreonine mark. Ser451 is modified (phosphoserine). A Phosphoserine; by PKA and PKB/AKT1 or PKB/AKT2 or BCKDK modification is found at Ser455. A Phosphoserine modification is found at Ser459. N6-acetyllysine; alternate occurs at positions 530, 536, and 544. Residues Lys530, Lys536, and Lys544 each participate in a glycyl lysine isopeptide (Lys-Gly) (interchain with G-Cter in ubiquitin); alternate cross-link. Thr629 carries the phosphothreonine modification. The residue at position 653 (Ser653) is a Phosphoserine. Position 672 is a phosphotyrosine (Tyr672). His750 serves as the catalytic Tele-phosphohistidine intermediate. CoA is bound at residue 769–779 (LKEAGVFVPRS). Ser829 is modified (phosphoserine). 4 positions are modified to N6-acetyllysine: Lys938, Lys958, Lys968, and Lys1067. Ser1090 carries the post-translational modification Phosphoserine.

This sequence in the N-terminal section; belongs to the succinate/malate CoA ligase beta subunit family. In the C-terminal section; belongs to the succinate/malate CoA ligase alpha subunit family. Homotetramer. Requires Mg(2+) as cofactor. Phosphorylated by PKA and GSK3 in a sequential manner; phosphorylation results in activation of its activity. Phosphorylation on Thr-447 and Ser-451 depends on the phosphorylation state of Ser-455. Phosphorylation on Ser-455 is decreased by prior phosphorylation on the other 2 residues. Phosphorylated at Ser-455 by BCKDK and dephosphorylated by protein phosphatase PPM1K. Post-translationally, ISGylated. In terms of processing, acetylated at Lys-530, Lys-536 and Lys-544 by KAT2B/PCAF. Acetylation is promoted by glucose and stabilizes the protein, probably by preventing ubiquitination at the same sites. Acetylation promotes de novo lipid synthesis. Deacetylated by SIRT2. Ubiquitinated at Lys-530, Lys-536 and Lys-544 by the BCR(KLHL25) E3 ubiquitin ligase complex and UBR4, leading to its degradation. Ubiquitination is probably inhibited by acetylation at same site. BCR(KLHL25)-mediated degradation of ACLY promotes fatty acid oxidation and is required for differentiation of inducible regulatory T (iTreg) cells.

It localises to the cytoplasm. The protein localises to the cytosol. It catalyses the reaction oxaloacetate + acetyl-CoA + ADP + phosphate = citrate + ATP + CoA. Its activity is regulated as follows. Phosphorylation results in activation of its activity. Glucose 6-phosphate, fructose 6-phosphate, fructose 2,6-bisphosphate, ribulose 5-phosphate, and fructose 1,6-bisphosphate also act as activators. Its function is as follows. Catalyzes the cleavage of citrate into oxaloacetate and acetyl-CoA, the latter serving as common substrate in multiple biochemical reactions in protein, carbohydrate and lipid metabolism. The chain is ATP-citrate synthase (ACLY) from Bos taurus (Bovine).